We begin with the raw amino-acid sequence, 604 residues long: Sulfite reductase [NADPH] flavoprotein alpha-component (604 aa).

The Flavodoxin-like domain occupies 66–204 (VTVLSASQTG…SANAWTDNIA (139 aa)). FMN is bound by residues 72–77 (SQTGNA), 119–122 (STQG), and 155–164 (LGDSSYPNFC). The FAD-binding FR-type domain occupies 239–453 (AAPFPAALLA…VERNDGFRLP (215 aa)). FAD-binding positions include Thr327, Gln361, 391–394 (RLYS), 409–411 (TVG), and 424–427 (GGAS). Residues 524–525 (SR), 530–534 (KIYVQ), and Asp566 each bind NADP(+). Tyr604 contributes to the FAD binding site.

It belongs to the NADPH-dependent sulphite reductase flavoprotein subunit CysJ family. In the N-terminal section; belongs to the flavodoxin family. The protein in the C-terminal section; belongs to the flavoprotein pyridine nucleotide cytochrome reductase family. As to quaternary structure, alpha(8)-beta(8). The alpha component is a flavoprotein, the beta component is a hemoprotein. It depends on FAD as a cofactor. Requires FMN as cofactor.

It carries out the reaction hydrogen sulfide + 3 NADP(+) + 3 H2O = sulfite + 3 NADPH + 4 H(+). It functions in the pathway sulfur metabolism; hydrogen sulfide biosynthesis; hydrogen sulfide from sulfite (NADPH route): step 1/1. Component of the sulfite reductase complex that catalyzes the 6-electron reduction of sulfite to sulfide. This is one of several activities required for the biosynthesis of L-cysteine from sulfate. The flavoprotein component catalyzes the electron flow from NADPH -&gt; FAD -&gt; FMN to the hemoprotein component. This is Sulfite reductase [NADPH] flavoprotein alpha-component from Neisseria meningitidis serogroup B (strain ATCC BAA-335 / MC58).